Here is a 376-residue protein sequence, read N- to C-terminus: Chorismate synthase (376 aa).

2 residues coordinate NADP(+): R39 and R45. FMN is bound by residues 115–117 (RSS), G276, 291–295 (KPIPT), and R317.

This sequence belongs to the chorismate synthase family. Homotetramer. FMNH2 serves as cofactor.

The enzyme catalyses 5-O-(1-carboxyvinyl)-3-phosphoshikimate = chorismate + phosphate. It participates in metabolic intermediate biosynthesis; chorismate biosynthesis; chorismate from D-erythrose 4-phosphate and phosphoenolpyruvate: step 7/7. Functionally, catalyzes the anti-1,4-elimination of the C-3 phosphate and the C-6 proR hydrogen from 5-enolpyruvylshikimate-3-phosphate (EPSP) to yield chorismate, which is the branch point compound that serves as the starting substrate for the three terminal pathways of aromatic amino acid biosynthesis. This reaction introduces a second double bond into the aromatic ring system. This Thermotoga maritima (strain ATCC 43589 / DSM 3109 / JCM 10099 / NBRC 100826 / MSB8) protein is Chorismate synthase.